The sequence spans 221 residues: Protein Thf1 (221 aa).

Residues 174-213 are a coiled coil; it reads TKERVEKDVNLYKSSLDKIEKALELIEMNIKDEKRRNKER.

Belongs to the THF1 family.

Functionally, may be involved in photosynthetic membrane biogenesis. The chain is Protein Thf1 from Prochlorococcus marinus (strain MIT 9211).